The sequence spans 179 residues: Large ribosomal subunit protein uL6 (179 aa).

It belongs to the universal ribosomal protein uL6 family. In terms of assembly, part of the 50S ribosomal subunit.

This protein binds to the 23S rRNA, and is important in its secondary structure. It is located near the subunit interface in the base of the L7/L12 stalk, and near the tRNA binding site of the peptidyltransferase center. The chain is Large ribosomal subunit protein uL6 from Gloeothece citriformis (strain PCC 7424) (Cyanothece sp. (strain PCC 7424)).